The following is a 454-amino-acid chain: tRNA modification GTPase MnmE (454 aa).

(6S)-5-formyl-5,6,7,8-tetrahydrofolate-binding residues include R23, E80, and K120. A TrmE-type G domain is found at 216 to 377; it reads GMKVVIAGRP…LRNHLKQSMG (162 aa). N226 lines the K(+) pocket. Residues 226-231, 245-251, 270-273, 335-338, and 358-360 contribute to the GTP site; these read NAGKSS, TDIAGTT, DTAG, NKAD, and SAR. Residue S230 coordinates Mg(2+). T245, I247, and T250 together coordinate K(+). T251 lines the Mg(2+) pocket. Position 454 (K454) interacts with (6S)-5-formyl-5,6,7,8-tetrahydrofolate.

This sequence belongs to the TRAFAC class TrmE-Era-EngA-EngB-Septin-like GTPase superfamily. TrmE GTPase family. As to quaternary structure, homodimer. Heterotetramer of two MnmE and two MnmG subunits. It depends on K(+) as a cofactor.

Its subcellular location is the cytoplasm. Functionally, exhibits a very high intrinsic GTPase hydrolysis rate. Involved in the addition of a carboxymethylaminomethyl (cmnm) group at the wobble position (U34) of certain tRNAs, forming tRNA-cmnm(5)s(2)U34. This Yersinia enterocolitica serotype O:8 / biotype 1B (strain NCTC 13174 / 8081) protein is tRNA modification GTPase MnmE.